A 202-amino-acid chain; its full sequence is Alpha-S1-casein (202 aa).

Disordered regions lie at residues 1–25 and 51–84; these read RPKLPHRHPEIIQNEQDSREKVLKE and LKEKQKDEHKEYLIEDPEQQESSSTSSSEEVVPI. Composition is skewed to basic and acidic residues over residues 16–25 and 51–63; these read QDSREKVLKE and LKEKQKDEHKEYL. Serine 18 carries the post-translational modification Phosphoserine. Positions 70 to 80 are enriched in low complexity; it reads QESSSTSSSEE. A phosphoserine mark is found at serine 72, serine 73, serine 74, serine 76, serine 77, and serine 78.

The protein belongs to the alpha-casein family. As to expression, mammary gland specific. Secreted in milk.

The protein localises to the secreted. Its function is as follows. Important role in the capacity of milk to transport calcium phosphate. This is Alpha-S1-casein from Equus asinus (Donkey).